A 246-amino-acid polypeptide reads, in one-letter code: MMVPQQGAVVKLDALAFAYPGGQAMRFDLLVPASEIVALMGPSGSGKSTLLNLIAGFERPDSGQVLIGSGDVTRLPPFKRPVSMIFQENNLFSHLTVEQNVGLGRSPTLRLSDGDRAAVSEAIARTGLAGKEQRLPRQLSGGERQRVALARVLVRRQPVLLLDEPFASLGPALRDEMLDLVAELHRDQQMTVIMATHDPRDAERLSNRLLFIENGTIAADGATSSFLAGQGPPAFARYLGERKRLR.

Residues 10 to 239 enclose the ABC transporter domain; that stretch reads VKLDALAFAY…QGPPAFARYL (230 aa). 41 to 48 contributes to the ATP binding site; the sequence is GPSGSGKS.

This sequence belongs to the ABC transporter superfamily. Thiamine importer (TC 3.A.1.19.1) family. As to quaternary structure, the complex is composed of two ATP-binding proteins (ThiQ), two transmembrane proteins (ThiP) and a solute-binding protein (ThiB).

The protein resides in the cell inner membrane. It catalyses the reaction thiamine(out) + ATP + H2O = thiamine(in) + ADP + phosphate + H(+). Part of the ABC transporter complex ThiBPQ involved in thiamine import. Responsible for energy coupling to the transport system. This Chelativorans sp. (strain BNC1) protein is Thiamine import ATP-binding protein ThiQ.